A 325-amino-acid polypeptide reads, in one-letter code: Elongation factor P--(R)-beta-lysine ligase (325 aa).

76-78 is a binding site for substrate; sequence SPE. ATP-binding positions include 100–102 and Asn109; that span reads RNE. Tyr118 serves as a coordination point for substrate. ATP is bound at residue 244-245; the sequence is EL. Glu251 lines the substrate pocket. Gly300 lines the ATP pocket.

This sequence belongs to the class-II aminoacyl-tRNA synthetase family. EpmA subfamily. In terms of assembly, homodimer.

The enzyme catalyses D-beta-lysine + L-lysyl-[protein] + ATP = N(6)-((3R)-3,6-diaminohexanoyl)-L-lysyl-[protein] + AMP + diphosphate + H(+). With EpmB is involved in the beta-lysylation step of the post-translational modification of translation elongation factor P (EF-P) on 'Lys-34'. Catalyzes the ATP-dependent activation of (R)-beta-lysine produced by EpmB, forming a lysyl-adenylate, from which the beta-lysyl moiety is then transferred to the epsilon-amino group of EF-P 'Lys-34'. This is Elongation factor P--(R)-beta-lysine ligase from Salmonella typhi.